A 213-amino-acid chain; its full sequence is Redox-sensing transcriptional repressor Rex (213 aa).

The segment at residues 18-57 is a DNA-binding region (H-T-H motif); sequence LYYRIFKRFHAEKIERANSKQIAEAIGIDSATVRRDFSYF. 92 to 97 is a binding site for NAD(+); it reads GIGNMG.

The protein belongs to the transcriptional regulatory Rex family. In terms of assembly, homodimer.

The protein localises to the cytoplasm. In terms of biological role, modulates transcription in response to changes in cellular NADH/NAD(+) redox state. Binds to the promoter of the aldehyde-alcohol dehydrogenase adhE gene. Functions as a redox-dependent repressor of adhE expression. The protein is Redox-sensing transcriptional repressor Rex of Streptococcus pneumoniae serotype 19F (strain G54).